We begin with the raw amino-acid sequence, 261 residues long: MQLSALALATLLATANAHFTVYYPGWRGDSHPTQTQGPCGGLNKIGERFKVNGKSVDVLLKTSHTSAITEYRLCLGDDCGTKSGSDGQKDFSKVLYGPINELGAGNFCMPGLPLGDLKDGQKGTIQVIMQAVDGNLYNCIDFEVDNSVDAFNAVCKNSTGVSAEAISNANAGSLAENTQGSGNSSGHAHGSSGSGSASASKTDSKSSAASGSASATSAAASSAASSAAASASATEEKNSGSLAYVNGALAIGGVVAAALLI.

Positions 1-17 (MQLSALALATLLATANA) are cleaved as a signal peptide. Cu(2+) contacts are provided by His-18, His-64, and Asp-133. Disulfide bonds link Cys-39/Cys-139 and Cys-108/Cys-155. N-linked (GlcNAc...) asparagine glycosylation is found at Asn-157 and Asn-183. The tract at residues 174–210 (LAENTQGSGNSSGHAHGSSGSGSASASKTDSKSSAAS) is disordered. Residues 180 to 210 (GSGNSSGHAHGSSGSGSASASKTDSKSSAAS) are compositionally biased toward low complexity. Asn-238 is lipidated: GPI-anchor amidated asparagine. Residues 239 to 261 (SGSLAYVNGALAIGGVVAAALLI) constitute a propeptide, removed in mature form.

It belongs to the X325 family. Cu(2+) is required as a cofactor.

The protein localises to the cell membrane. Lytic polysaccharide monooxygenase-like protein that has diverged to biological functions other than polysaccharide degradation since it does not perform oxidative cleavage of polysaccharides. Acts as a cell surface-bound protein that functions in the copper-accumulation pathway. The protein is Lytic polysaccharide monooxygenase-like protein X325 of Yarrowia lipolytica (strain CLIB 122 / E 150) (Yeast).